The following is a 314-amino-acid chain: Hydroxyethylthiazole kinase (314 aa).

Met70 is a binding site for substrate. 2 residues coordinate ATP: Arg145 and Ser217. Position 244 (Gly244) interacts with substrate.

The protein belongs to the Thz kinase family. Requires Mg(2+) as cofactor.

The catalysed reaction is 5-(2-hydroxyethyl)-4-methylthiazole + ATP = 4-methyl-5-(2-phosphooxyethyl)-thiazole + ADP + H(+). It functions in the pathway cofactor biosynthesis; thiamine diphosphate biosynthesis; 4-methyl-5-(2-phosphoethyl)-thiazole from 5-(2-hydroxyethyl)-4-methylthiazole: step 1/1. Catalyzes the phosphorylation of the hydroxyl group of 4-methyl-5-beta-hydroxyethylthiazole (THZ). This Bifidobacterium longum (strain DJO10A) protein is Hydroxyethylthiazole kinase.